A 138-amino-acid polypeptide reads, in one-letter code: ATP synthase epsilon chain (138 aa).

This sequence belongs to the ATPase epsilon chain family. In terms of assembly, F-type ATPases have 2 components, CF(1) - the catalytic core - and CF(0) - the membrane proton channel. CF(1) has five subunits: alpha(3), beta(3), gamma(1), delta(1), epsilon(1). CF(0) has three main subunits: a, b and c.

It is found in the cell inner membrane. Its function is as follows. Produces ATP from ADP in the presence of a proton gradient across the membrane. The chain is ATP synthase epsilon chain from Geotalea uraniireducens (strain Rf4) (Geobacter uraniireducens).